A 586-amino-acid polypeptide reads, in one-letter code: MKDYVRIKIASPQQVLSWTERSLPDGRLIGRLTNFDMLHFETKKPVFGGLLCERIFGSTKTNQCFCGKYKKMFQKGYANNFVLVCANCFVEINNCNRRRFRMGYIDLVFPLIHTWYLKSRPCYLAIMLGKKVKNIKKMCFMDSYIKIRNNDGQTVGILTGAEAIYSRLSKIDLESLIEFLYKRLVGIEKLKEYNFEKYLWLRKKFINRIKLVNAFIQTNTKPIWIMIHFLPVLPPDIRPVVKLQDGTVIMTDLNFLYIDIIYGNNKIIKLRKFLLPEEFMLNEKRSLQVKVDAFINNENISENPYEQNDKKLKSITEGLKGKKGRFRENLLGKTVDYSGRSVIVVEPKLLLHECGMPLDIALELFHPILIKMLIRFKFSVGIREAKRHIYNASNFVIPVLEKVLNSYFILLNRAPTLHRLGIQSFQPKVTFEKAILLHPLVCSAFNADFDGDQMGIHIPLSLKSLAEARSMLISINNCVLPANGLPSILPSQDMVLGCYYVTLENCNLDFILTNLKIYANIEKVKSAYHKGEILIQTFVWLICQKFPNILKNSKIRIKKKRMVKKLVFFRTTIGRIFFDDMIKEFL.

Positions 64, 66, 85, and 88 each coordinate Zn(2+). Mg(2+) is bound by residues aspartate 448, aspartate 450, and aspartate 452.

The protein belongs to the RNA polymerase beta' chain family. RpoC1 subfamily. As to quaternary structure, in plastids the minimal PEP RNA polymerase catalytic core is composed of four subunits: alpha, beta, beta', and beta''. When a (nuclear-encoded) sigma factor is associated with the core the holoenzyme is formed, which can initiate transcription. Requires Mg(2+) as cofactor. It depends on Zn(2+) as a cofactor.

The protein resides in the plastid. The protein localises to the chloroplast. It carries out the reaction RNA(n) + a ribonucleoside 5'-triphosphate = RNA(n+1) + diphosphate. Its function is as follows. DNA-dependent RNA polymerase catalyzes the transcription of DNA into RNA using the four ribonucleoside triphosphates as substrates. This chain is DNA-directed RNA polymerase subunit beta', found in Euglena gracilis.